A 129-amino-acid chain; its full sequence is Small ribosomal subunit protein uS11 (129 aa).

The protein belongs to the universal ribosomal protein uS11 family. As to quaternary structure, part of the 30S ribosomal subunit. Interacts with proteins S7 and S18. Binds to IF-3.

Functionally, located on the platform of the 30S subunit, it bridges several disparate RNA helices of the 16S rRNA. Forms part of the Shine-Dalgarno cleft in the 70S ribosome. The protein is Small ribosomal subunit protein uS11 of Symbiobacterium thermophilum (strain DSM 24528 / JCM 14929 / IAM 14863 / T).